The primary structure comprises 293 residues: Ribulose bisphosphate carboxylase/oxygenase activase, chloroplastic (293 aa).

75–82 (PGTGKTTV) contacts ATP.

It belongs to the CbxX/CfxQ family. As to quaternary structure, forms homooligomers. Forms heterohexameric rings with the nuclear-encoded Rca subunit consisting of 3 of each nuclear- and plastidial-encoded subunits that alternate in the ring.

The protein localises to the plastid. Its subcellular location is the chloroplast. In terms of biological role, required for the expression of ribulose 1,5-bisphosphate carboxylase/oxygenase (RuBisCo). ATPase involved in the activation of red-type RuBisCo, which tends to form inactive complexes with its substrate ribulose 1,5-bisphosphate (RuBP). Catalyzes the release of RuBP from inhibited RuBisCo in an ATP-dependent manner. Activation of RuBisCO involves the ATP-dependent carboxylation of the epsilon-amino group of lysine leading to a carbamate structure. The nuclear-encoded subunit plays a more critical role in activase function than the plastidial-encoded subunit. The chain is Ribulose bisphosphate carboxylase/oxygenase activase, chloroplastic from Cyanidioschyzon merolae (strain NIES-3377 / 10D) (Unicellular red alga).